Reading from the N-terminus, the 629-residue chain is Putrebactin synthase (629 aa).

Belongs to the IucA/IucC family. Homodimer.

The catalysed reaction is 2 N-(3-carboxypropanoyl)-N-hydroxyputrescine + 2 ATP = putrebactin + 2 AMP + 2 diphosphate + 2 H(+). It catalyses the reaction 2 N-(3-carboxypropanoyl)-N-hydroxyputrescine + ATP = pre-putrebactin + AMP + diphosphate + H(+). The enzyme catalyses pre-putrebactin + ATP = putrebactin + AMP + diphosphate + H(+). It participates in siderophore biosynthesis. Requires Mg(2+) for activity. Functionally, ligase involved in the biosynthesis of the siderophore putrebactin. Catalyzes the ATP-dependent head-to-tail dimerization of N-hydroxy-N-succinyl-putrescine (HSP) to give pre-putrebactin and subsequent macrocyclization of pre-putrebactin to give putrebactin. The protein is Putrebactin synthase of Shewanella sp. (strain MR-4).